A 150-amino-acid chain; its full sequence is 3-hydroxyacyl-[acyl-carrier-protein] dehydratase FabZ (150 aa).

His-54 is an active-site residue.

This sequence belongs to the thioester dehydratase family. FabZ subfamily.

The protein resides in the cytoplasm. It catalyses the reaction a (3R)-hydroxyacyl-[ACP] = a (2E)-enoyl-[ACP] + H2O. In terms of biological role, involved in unsaturated fatty acids biosynthesis. Catalyzes the dehydration of short chain beta-hydroxyacyl-ACPs and long chain saturated and unsaturated beta-hydroxyacyl-ACPs. The chain is 3-hydroxyacyl-[acyl-carrier-protein] dehydratase FabZ from Vibrio vulnificus (strain CMCP6).